The chain runs to 445 residues: Phosphoglucosamine mutase (445 aa).

Residue Ser101 is the Phosphoserine intermediate of the active site. Ser101, Asp240, Asp242, and Asp244 together coordinate Mg(2+). At Ser101 the chain carries Phosphoserine.

Belongs to the phosphohexose mutase family. Mg(2+) serves as cofactor. Activated by phosphorylation.

It catalyses the reaction alpha-D-glucosamine 1-phosphate = D-glucosamine 6-phosphate. Catalyzes the conversion of glucosamine-6-phosphate to glucosamine-1-phosphate. This Pseudomonas fluorescens (strain SBW25) protein is Phosphoglucosamine mutase.